The sequence spans 275 residues: Trans-aconitate 2-methyltransferase (275 aa).

Belongs to the methyltransferase superfamily. Tam family.

It is found in the cytoplasm. It catalyses the reaction trans-aconitate + S-adenosyl-L-methionine = (E)-3-(methoxycarbonyl)pent-2-enedioate + S-adenosyl-L-homocysteine. Functionally, catalyzes the S-adenosylmethionine monomethyl esterification of trans-aconitate. This is Trans-aconitate 2-methyltransferase from Pseudomonas aeruginosa (strain ATCC 15692 / DSM 22644 / CIP 104116 / JCM 14847 / LMG 12228 / 1C / PRS 101 / PAO1).